We begin with the raw amino-acid sequence, 314 residues long: Malate dehydrogenase (314 aa).

NAD(+) contacts are provided by residues 11 to 16 (GSGNIG) and aspartate 35. 2 residues coordinate substrate: arginine 84 and arginine 90. Residues asparagine 97 and 120–122 (ITN) contribute to the NAD(+) site. 2 residues coordinate substrate: asparagine 122 and arginine 153. Histidine 177 functions as the Proton acceptor in the catalytic mechanism.

This sequence belongs to the LDH/MDH superfamily. MDH type 3 family.

The enzyme catalyses (S)-malate + NAD(+) = oxaloacetate + NADH + H(+). In terms of biological role, catalyzes the reversible oxidation of malate to oxaloacetate. In Rickettsia bellii (strain OSU 85-389), this protein is Malate dehydrogenase.